We begin with the raw amino-acid sequence, 355 residues long: uncharacterized protein (355 aa).

This sequence belongs to the TmcAL family.

This is an uncharacterized protein from Methanocaldococcus jannaschii (strain ATCC 43067 / DSM 2661 / JAL-1 / JCM 10045 / NBRC 100440) (Methanococcus jannaschii).